The sequence spans 256 residues: Imidazole glycerol phosphate synthase subunit HisF (256 aa).

Active-site residues include Asp12 and Asp131.

Belongs to the HisA/HisF family. In terms of assembly, heterodimer of HisH and HisF.

It localises to the cytoplasm. The enzyme catalyses 5-[(5-phospho-1-deoxy-D-ribulos-1-ylimino)methylamino]-1-(5-phospho-beta-D-ribosyl)imidazole-4-carboxamide + L-glutamine = D-erythro-1-(imidazol-4-yl)glycerol 3-phosphate + 5-amino-1-(5-phospho-beta-D-ribosyl)imidazole-4-carboxamide + L-glutamate + H(+). Its pathway is amino-acid biosynthesis; L-histidine biosynthesis; L-histidine from 5-phospho-alpha-D-ribose 1-diphosphate: step 5/9. In terms of biological role, IGPS catalyzes the conversion of PRFAR and glutamine to IGP, AICAR and glutamate. The HisF subunit catalyzes the cyclization activity that produces IGP and AICAR from PRFAR using the ammonia provided by the HisH subunit. The polypeptide is Imidazole glycerol phosphate synthase subunit HisF (Micrococcus luteus (strain ATCC 4698 / DSM 20030 / JCM 1464 / CCM 169 / CCUG 5858 / IAM 1056 / NBRC 3333 / NCIMB 9278 / NCTC 2665 / VKM Ac-2230) (Micrococcus lysodeikticus)).